The sequence spans 433 residues: F-box only protein 15 (433 aa).

In terms of domain architecture, F-box spans 1-41 (MPSEILVKILSYLDAVTLVCIGCVSRRFYHLADDNLIWVRK).

As to quaternary structure, directly interacts with SKP1 and CUL1. Expressed in testis.

Its function is as follows. Substrate-recognition component of the SCF (SKP1-CUL1-F-box protein)-type E3 ubiquitin ligase complex. The sequence is that of F-box only protein 15 (Fbxo15) from Mus musculus (Mouse).